We begin with the raw amino-acid sequence, 409 residues long: G2/mitotic-specific cyclin-B (409 aa).

This sequence belongs to the cyclin family. Cyclin AB subfamily. In terms of assembly, interacts with the CDK1 protein kinase to form a serine/threonine kinase holoenzyme complex also known as maturation promoting factor (MPF). The cyclin subunit imparts substrate specificity to the complex.

Functionally, essential for the control of the cell cycle at the G2/M (mitosis) transition. This chain is G2/mitotic-specific cyclin-B, found in Arbacia punctulata (Punctuate sea urchin).